Reading from the N-terminus, the 172-residue chain is Putative acetyltransferase YvoF (172 aa).

Belongs to the transferase hexapeptide repeat family.

The sequence is that of Putative acetyltransferase YvoF (yvoF) from Bacillus subtilis (strain 168).